The following is a 109-amino-acid chain: Stress-response A/B barrel domain-containing protein HS1 (109 aa).

In terms of domain architecture, Stress-response A/B barrel spans 8-102; it reads VKHVLLASFK…SLDKVLVIDY (95 aa). Residues Val36, Ile39, Glu40, and Met42 each coordinate Mg(2+).

In terms of assembly, homodimer. Mg(2+) is required as a cofactor.

Its function is as follows. Heat stable protein involved in defense against fungal pathogens. Possesses antifungal activity against diverse pathogenic fungi. Possesses antimicrobial activity. Possesses ribonuclease activity. The protein is Stress-response A/B barrel domain-containing protein HS1 of Arabidopsis thaliana (Mouse-ear cress).